Here is a 243-residue protein sequence, read N- to C-terminus: UPF0758 protein AM1_4368 (243 aa).

The MPN domain occupies 113–235 (VIDDPAVAAA…FTSLRQTTSL (123 aa)). Zn(2+)-binding residues include histidine 184, histidine 186, and aspartate 197. The JAMM motif signature appears at 184-197 (HNHPSGQTDPSPED).

It belongs to the UPF0758 family.

The sequence is that of UPF0758 protein AM1_4368 from Acaryochloris marina (strain MBIC 11017).